The chain runs to 64 residues: Large ribosomal subunit protein uL29 (64 aa).

It belongs to the universal ribosomal protein uL29 family.

This is Large ribosomal subunit protein uL29 from Legionella pneumophila (strain Lens).